The chain runs to 484 residues: Glutamyl-tRNA(Gln) amidotransferase subunit A (484 aa).

Residues Lys76 and Ser151 each act as charge relay system in the active site. Catalysis depends on Ser175, which acts as the Acyl-ester intermediate.

It belongs to the amidase family. GatA subfamily. In terms of assembly, heterotrimer of A, B and C subunits.

It carries out the reaction L-glutamyl-tRNA(Gln) + L-glutamine + ATP + H2O = L-glutaminyl-tRNA(Gln) + L-glutamate + ADP + phosphate + H(+). Allows the formation of correctly charged Gln-tRNA(Gln) through the transamidation of misacylated Glu-tRNA(Gln) in organisms which lack glutaminyl-tRNA synthetase. The reaction takes place in the presence of glutamine and ATP through an activated gamma-phospho-Glu-tRNA(Gln). The sequence is that of Glutamyl-tRNA(Gln) amidotransferase subunit A from Thioalkalivibrio sulfidiphilus (strain HL-EbGR7).